The primary structure comprises 1496 residues: DNA-directed RNA polymerase subunit beta' (1496 aa).

Residues cysteine 67, cysteine 69, cysteine 82, and cysteine 85 each contribute to the Zn(2+) site. Mg(2+)-binding residues include aspartate 499, aspartate 501, and aspartate 503. The Zn(2+) site is built by cysteine 867, cysteine 943, cysteine 950, and cysteine 953.

It belongs to the RNA polymerase beta' chain family. In terms of assembly, the RNAP catalytic core consists of 2 alpha, 1 beta, 1 beta' and 1 omega subunit. When a sigma factor is associated with the core the holoenzyme is formed, which can initiate transcription. The cofactor is Mg(2+). It depends on Zn(2+) as a cofactor.

It catalyses the reaction RNA(n) + a ribonucleoside 5'-triphosphate = RNA(n+1) + diphosphate. In terms of biological role, DNA-dependent RNA polymerase catalyzes the transcription of DNA into RNA using the four ribonucleoside triphosphates as substrates. The sequence is that of DNA-directed RNA polymerase subunit beta' from Chlorobium limicola (strain DSM 245 / NBRC 103803 / 6330).